Consider the following 257-residue polypeptide: Thiazole synthase (257 aa).

Residue lysine 96 is the Schiff-base intermediate with DXP of the active site. Residues glycine 157, 184-185 (AG), and 206-207 (NT) each bind 1-deoxy-D-xylulose 5-phosphate.

The protein belongs to the ThiG family. As to quaternary structure, homotetramer. Forms heterodimers with either ThiH or ThiS.

The protein localises to the cytoplasm. The enzyme catalyses [ThiS sulfur-carrier protein]-C-terminal-Gly-aminoethanethioate + 2-iminoacetate + 1-deoxy-D-xylulose 5-phosphate = [ThiS sulfur-carrier protein]-C-terminal Gly-Gly + 2-[(2R,5Z)-2-carboxy-4-methylthiazol-5(2H)-ylidene]ethyl phosphate + 2 H2O + H(+). Its pathway is cofactor biosynthesis; thiamine diphosphate biosynthesis. Its function is as follows. Catalyzes the rearrangement of 1-deoxy-D-xylulose 5-phosphate (DXP) to produce the thiazole phosphate moiety of thiamine. Sulfur is provided by the thiocarboxylate moiety of the carrier protein ThiS. In vitro, sulfur can be provided by H(2)S. In Allorhizobium ampelinum (strain ATCC BAA-846 / DSM 112012 / S4) (Agrobacterium vitis (strain S4)), this protein is Thiazole synthase.